Here is a 406-residue protein sequence, read N- to C-terminus: Probable G-protein coupled receptor tkr-1 (406 aa).

Topologically, residues 1-47 (MNQEFLIQLGERACKNAENLTLPAELEGIFFCAPSSRESLATQVFVA) are extracellular. Residues 48-68 (IAFVLLMATAIIGNSVVMWII) form a helical membrane-spanning segment. Residues 69–76 (YQHKVMHY) are Cytoplasmic-facing. A helical transmembrane segment spans residues 77–97 (GFNYFLFNMAFADLLIALFNV). The Extracellular portion of the chain corresponds to 98 to 115 (GTSWTYNLYYDWWYGDLC). A helical membrane pass occupies residues 116-136 (TLTSFFGIAPTTVSVCSMMAL). At 137–158 (SWDRCQAVVNPLQKRPLSRKRS) the chain is on the cytoplasmic side. A helical membrane pass occupies residues 159–179 (VIAILIIWVVSTVTALPFAIA). The Extracellular segment spans residues 180-204 (ASVNSLYTYDVVTSTVSKAHVCSAP). A helical transmembrane segment spans residues 205 to 225 (VNTFFEKVLFGIQYALPIIIL). Over 226 to 261 (GSTFTRIAVAFRATNEATDSSLKNNHTRAKSKAVKM) the chain is Cytoplasmic. A helical transmembrane segment spans residues 262–282 (LFLMVVAFVVCWLPYHIYHAF). The Extracellular portion of the chain corresponds to 283 to 297 (ALEEFFDAARGKYAY). Residues 298 to 318 (LLIYWIAMSSCAYNPIIYCFA) traverse the membrane as a helical segment. The Cytoplasmic segment spans residues 319-406 (NERFRIGFRY…KVHLLSCHER (88 aa)).

The protein belongs to the G-protein coupled receptor 1 family.

It localises to the cell membrane. Functionally, not known. Putative receptor. The sequence is that of Probable G-protein coupled receptor tkr-1 (tkr-1) from Caenorhabditis elegans.